Here is a 427-residue protein sequence, read N- to C-terminus: Light-independent protochlorophyllide reductase subunit N (427 aa).

[4Fe-4S] cluster-binding residues include Cys30, Cys55, and Cys116.

This sequence belongs to the BchN/ChlN family. Protochlorophyllide reductase is composed of three subunits; BchL, BchN and BchB. Forms a heterotetramer of two BchB and two BchN subunits. Requires [4Fe-4S] cluster as cofactor.

The catalysed reaction is chlorophyllide a + oxidized 2[4Fe-4S]-[ferredoxin] + 2 ADP + 2 phosphate = protochlorophyllide a + reduced 2[4Fe-4S]-[ferredoxin] + 2 ATP + 2 H2O. The protein operates within porphyrin-containing compound metabolism; bacteriochlorophyll biosynthesis (light-independent). Component of the dark-operative protochlorophyllide reductase (DPOR) that uses Mg-ATP and reduced ferredoxin to reduce ring D of protochlorophyllide (Pchlide) to form chlorophyllide a (Chlide). This reaction is light-independent. The NB-protein (BchN-BchB) is the catalytic component of the complex. This chain is Light-independent protochlorophyllide reductase subunit N, found in Rhodopseudomonas palustris (strain BisA53).